The primary structure comprises 173 residues: Large ribosomal subunit protein uL10 (173 aa).

The protein belongs to the universal ribosomal protein uL10 family. As to quaternary structure, part of the ribosomal stalk of the 50S ribosomal subunit. The N-terminus interacts with L11 and the large rRNA to form the base of the stalk. The C-terminus forms an elongated spine to which L12 dimers bind in a sequential fashion forming a multimeric L10(L12)X complex.

Forms part of the ribosomal stalk, playing a central role in the interaction of the ribosome with GTP-bound translation factors. This Thiobacillus denitrificans (strain ATCC 25259 / T1) protein is Large ribosomal subunit protein uL10.